A 933-amino-acid chain; its full sequence is Potassium voltage-gated channel subfamily KQT member 5 (933 aa).

At 1-126 (MPRHHAGGEE…YNVLERPRGW (126 aa)) the chain is on the cytoplasmic side. Residue S89 is modified to Phosphoserine. Residues 127–147 (AFVYHAFVFLLVFGCLILSVF) form a helical membrane-spanning segment. At 148–157 (STIPEHTKLA) the chain is on the extracellular side. Residues 158-178 (SSCLLILEFVMIVVFGLEFII) traverse the membrane as a helical segment. The Cytoplasmic segment spans residues 179–201 (RIWSAGCCCRYRGWQGRLRFARK). A helical transmembrane segment spans residues 202-222 (PFCVIDTIVLIASIAVVSAKT). Topologically, residues 223-230 (QGNIFATS) are extracellular. Residues 231 to 253 (ALRSLRFLQILRMVRMDRRGGTW) traverse the membrane as a helical; Voltage-sensor segment. The a 1,2-diacyl-sn-glycero-3-phospho-(1D-myo-inositol-4,5-bisphosphate) site is built by R249 and K265. The Cytoplasmic segment spans residues 254 to 267 (KLLGSVVYAHSKEL). A helical membrane pass occupies residues 268–288 (ITAWYIGFLVLIFSSFLVYLV). Residues 289-299 (EKDANKEFSTY) lie on the Extracellular side of the membrane. The segment at residues 300-320 (ADALWWGTITLTTIGYGDKTP) is an intramembrane region (pore-forming). At 321-326 (LTWLGR) the chain is on the extracellular side. Residues 327–347 (LLSAGFALLGISFFALPAGIL) traverse the membrane as a helical segment. Residues 348–933 (GSGFALKVQE…ALSLPHVKLN (586 aa)) lie on the Cytoplasmic side of the membrane. K362 contributes to the a 1,2-diacyl-sn-glycero-3-phospho-(1D-myo-inositol-4,5-bisphosphate) binding site. The interval 371–379 (AANLIQCVW) is interaction with CALM. Positions 405–465 (SPTKKEQGEA…EGSPTKVQKS (61 aa)) are disordered. Positions 432 to 441 (RGQSIKSRQA) are enriched in polar residues. S448 is subject to Phosphoserine. The segment at 522–529 (VIRAIRIM) is interaction with CALM. The interval 578-598 (KGQMTSDKKSREKITAEHETT) is disordered. Basic and acidic residues predominate over residues 583–598 (SDKKSREKITAEHETT). Position 832 is a phosphoserine (S832). The disordered stretch occupies residues 878-933 (GAEETETDTFDGTPPPAGEAAFSSDSLRTGRSRSSQNICKTGDSTDALSLPHVKLN). Over residues 900-924 (SSDSLRTGRSRSSQNICKTGDSTDA) the composition is skewed to polar residues.

It belongs to the potassium channel family. KQT (TC 1.A.1.15) subfamily. Kv7.5/KCNQ5 sub-subfamily. In terms of assembly, homotetramer; forms a functional homotetrameric channel resulting in the expression of a small M-current. Heterotetramer with KCNQ3; forms heterotetrameric M-channel responsible for the native M-current. Heterotetramer with KCNQ1; forms a functional voltage-gated potassium channel. Interacts (via C-terminus) with calmodulin/CALM; forms a heterooctameric structure (with 4:4 KCNQ1:CALM stoichiometry); the interaction is calcium-independent, constitutive and participates in the channel function. In terms of tissue distribution, strongly expressed in brain. Also expressed in colon, lung and uterus.

It is found in the cell membrane. The catalysed reaction is K(+)(in) = K(+)(out). Its activity is regulated as follows. Phosphatidylinositol-4,5-bisphosphate (PIP2) is essential to activate KCNQ5 channel by inducing the coupling of the voltage-sensing domain (VSD) and the pore-forming domain (PD). Calcium suppresses KCNQ5 channel current through calcium-bound CALM C-terminus. Therefore CALM acts as calcium sensor that controls channel activity. Zinc potentiates channel activity in a pH-dependent manner. The activity is modulated by small changes in cell volume. Activated by the anticonvulsant retigabine. Inhibited by linopirdine and XE991. Functionally, pore-forming subunit of the voltage-gated potassium (Kv) channel broadly expressed in brain and skeletal muscle and involved in the regulation of neuronal excitability. Associates with KCNQ3/Kv7.3 pore-forming subunit to form a potassium channel which contributes to M-type current, a slowly activating and deactivating potassium conductance which plays a critical role in determining the subthreshold electrical excitability of neurons. Contributes, with other potassium channels, to the molecular diversity of a heterogeneous population of M-channels, varying in kinetic and pharmacological properties, which underlie this physiologically important current. Also forms a functional channel with KCNQ1/Kv7.1 subunit that may contribute to vasoconstriction and hypertension. Channel may be selectively permeable in vitro to other cations besides potassium, in decreasing order of affinity K(+) = Rb(+) &gt; Cs(+) &gt; Na(+). This is Potassium voltage-gated channel subfamily KQT member 5 from Mus musculus (Mouse).